The primary structure comprises 435 residues: Enolase (435 aa).

Residue Gln167 coordinates (2R)-2-phosphoglycerate. The active-site Proton donor is the Glu209. Residues Asp246, Glu291, and Asp318 each contribute to the Mg(2+) site. The (2R)-2-phosphoglycerate site is built by Lys343, Arg372, Ser373, and Lys394. The active-site Proton acceptor is the Lys343.

It belongs to the enolase family. As to quaternary structure, component of the RNA degradosome, a multiprotein complex involved in RNA processing and mRNA degradation. Mg(2+) is required as a cofactor.

The protein localises to the cytoplasm. It localises to the secreted. The protein resides in the cell surface. It carries out the reaction (2R)-2-phosphoglycerate = phosphoenolpyruvate + H2O. It participates in carbohydrate degradation; glycolysis; pyruvate from D-glyceraldehyde 3-phosphate: step 4/5. Catalyzes the reversible conversion of 2-phosphoglycerate (2-PG) into phosphoenolpyruvate (PEP). It is essential for the degradation of carbohydrates via glycolysis. The sequence is that of Enolase from Psychromonas ingrahamii (strain DSM 17664 / CCUG 51855 / 37).